We begin with the raw amino-acid sequence, 113 residues long: Large ribosomal subunit protein uL24 (113 aa).

The protein belongs to the universal ribosomal protein uL24 family. Part of the 50S ribosomal subunit.

One of two assembly initiator proteins, it binds directly to the 5'-end of the 23S rRNA, where it nucleates assembly of the 50S subunit. Its function is as follows. One of the proteins that surrounds the polypeptide exit tunnel on the outside of the subunit. This chain is Large ribosomal subunit protein uL24, found in Chlamydia abortus (strain DSM 27085 / S26/3) (Chlamydophila abortus).